A 440-amino-acid chain; its full sequence is Adenylosuccinate synthetase (440 aa).

GTP-binding positions include 12–18 (GDEGKGK) and 40–42 (GHT). Catalysis depends on Asp13, which acts as the Proton acceptor. Positions 13 and 40 each coordinate Mg(2+). IMP-binding positions include 13-16 (DEGK), 38-41 (NAGH), Thr128, Arg142, Gln223, Thr238, and Arg302. Catalysis depends on His41, which acts as the Proton donor. 298–304 (TTTGRPR) serves as a coordination point for substrate. Residues Arg304, 330–332 (KLD), and 412–414 (SVG) contribute to the GTP site.

Belongs to the adenylosuccinate synthetase family. In terms of assembly, homodimer. Requires Mg(2+) as cofactor.

It is found in the cytoplasm. It catalyses the reaction IMP + L-aspartate + GTP = N(6)-(1,2-dicarboxyethyl)-AMP + GDP + phosphate + 2 H(+). The protein operates within purine metabolism; AMP biosynthesis via de novo pathway; AMP from IMP: step 1/2. Its function is as follows. Plays an important role in the de novo pathway of purine nucleotide biosynthesis. Catalyzes the first committed step in the biosynthesis of AMP from IMP. This is Adenylosuccinate synthetase from Gloeobacter violaceus (strain ATCC 29082 / PCC 7421).